We begin with the raw amino-acid sequence, 727 residues long: MNQSRSFVTGRGRDLSRTPSALSSNSETPGSMSSPSEGKTNAWVNSAYVSNFPALGQSQGLPSHKCSALALRSSQTTYIINFPRQHWNIMTFPNQSEAILATVASYAKDLDGKNSFAVFDTLKMPWSCRLGEKSCSGIDTLGHLADVHMHVLDPAEAEGKNLSDSETVYVYVTPPNLTDVKPTTIVLTECAANAKSANDLRQYIVTQLRKMPSLPFGCTTYAPGFLSDGVCKEHPNLFTSEELGAKIKVLTKLLIRCATSMSQDGSNAFCPKHPKVKIVHESNATSYILFNRPNGMVATNLILSDLPDDDCPTCWILKLAISEARYYALDGHHRCRSRIITPSVFRYLASIVIRVSMDSVLAPSDASSTDHAALVNMMCGIIQNTPAMRHVGISTGSEKVNNRSMRVIIMQENADRATQMSALYHLFLDYFGALNGWGFYFCSLTSLYGEFHGFSVGFSGEITHVNVASVIAKNWDTQSGIDNILEFKTITIPVHNEDIVCMVERTLAESFEVVINEHFNGASTIKVRRNGGDSRFNFTISNPRDAFLLLQKAVVDGGILQKILCRAMLKAIASLALRADREVQDVSFSFVLKMSLNPVNKSDPKSSELAHAAQMNSLPEFLASTPFTMQLGTLRDALLKKTGNVTVINMARTTEEVSNDALQEILKSIGGNSMTLDDPAEPLSDIESIPDPPPRSWASEDEAVNSPQTYSSRRKARKARAASKLSK.

2 disordered regions span residues 1–38 and 671–727; these read MNQS…PSEG and GNSM…KLSK. Polar residues predominate over residues 17–38; sequence RTPSALSSNSETPGSMSSPSEG. Residues 712 to 727 are compositionally biased toward basic residues; the sequence is SRRKARKARAASKLSK.

This chain is Non-structural protein 4, found in Rice dwarf virus (isolate Fujian) (RDV).